The chain runs to 227 residues: Ribose-5-phosphate isomerase A (227 aa).

Residues 30–33, 86–89, and 99–102 each bind substrate; these read TGST, DGAD, and KGMG. Residue Glu108 is the Proton acceptor of the active site. Position 126 (Lys126) interacts with substrate.

Belongs to the ribose 5-phosphate isomerase family. As to quaternary structure, homodimer.

The enzyme catalyses aldehydo-D-ribose 5-phosphate = D-ribulose 5-phosphate. It functions in the pathway carbohydrate degradation; pentose phosphate pathway; D-ribose 5-phosphate from D-ribulose 5-phosphate (non-oxidative stage): step 1/1. Catalyzes the reversible conversion of ribose-5-phosphate to ribulose 5-phosphate. The polypeptide is Ribose-5-phosphate isomerase A (Thermus thermophilus (strain ATCC 27634 / DSM 579 / HB8)).